The primary structure comprises 423 residues: MSATHPTRLGTRTKESNACASQGLVRKPPWANEGEGFELHFWRKICRNCNVVKKSMTVLLSNEEDRKVGRLFEDTKYTTLIAKLKSDGIPMYKRNVMILTNPVAAKKNVSINTVTYEWAPPVQNQALARQYMQMLPKEKQPVAGSEGAQYRKKQLAKQLPAHDQDPSKCHELSPKEVKEMEQFVKKYKSEALGVGDVKFPSEMNAQGDKVHNCGNRHAPAAVASKDKSAESKKTQYSCYCCKHTTNEGEPAIYAERAGYDKLWHPACFICSTCGELLVDMIYFWKNGKLYCGRHYCDSEKPRCAGCDELIFSNEYTQAENQNWHLKHFCCFDCDHILAGKIYVMVTDKPVCKPCYVKNHAVVCQGCHNAIDPEVQRVTYNNFSWHASTECFLCSCCSKCLIGQKFMPVEGMVFCSVECKRMMS.

2 disordered regions span residues 1–21 (MSATHPTRLGTRTKESNACAS) and 138–169 (EKQPVAGSEGAQYRKKQLAKQLPAHDQDPSKC). In terms of domain architecture, PET spans 97–204 (MILTNPVAAK…GDVKFPSEMN (108 aa)). Basic and acidic residues predominate over residues 160–169 (PAHDQDPSKC). LIM zinc-binding domains follow at residues 236-299 (YSCY…CDSE), 301-361 (PRCA…NHAV), and 364-423 (QGCH…RMMS).

The protein belongs to the prickle / espinas / testin family. Interacts via LIM domain 1 with ZYX. Interacts (via LIM domain 3) with ENAH and VASP. Interacts with ALKBH4, talin, actin, alpha-actinin, GRIP1 and PXN. Interacts (via LIM domain 2) with ACTL7A (via N-terminus). Heterodimer with ACTL7A; the heterodimer interacts with ENAH to form a heterotrimer. As to expression, detected at the acrosome of round spermatids (at protein level). Isoform TES1 transcript is highly expressed in adult testis and detected at low levels in other tissues. Isoform TES2 transcript is highly expressed in testis, kidney and spleen; intermediate in thymus, submaxillary gland and lung; detected at low levels in other tissues.

It is found in the cytoplasm. The protein localises to the cell junction. The protein resides in the focal adhesion. Functionally, scaffold protein that may play a role in cell adhesion, cell spreading and in the reorganization of the actin cytoskeleton. Plays a role in the regulation of cell proliferation. May act as a tumor suppressor. This Mus musculus (Mouse) protein is Testin (Tes).